The primary structure comprises 291 residues: 29 kDa ribonucleoprotein B, chloroplastic (291 aa).

The 79-residue stretch at 87–165 folds into the RRM 1 domain; the sequence is LKLFVGNLPF…RAIRVNAGPA (79 aa). Positions 164-202 are disordered; that stretch reads PAPAKRENSSFGGGRGGNSSYGGGRDGNSSFGGARGGRS. The linker (Gly-rich) stretch occupies residues 166–206; that stretch reads PAKRENSSFGGGRGGNSSYGGGRDGNSSFGGARGGRSVDSS. Residues 174–189 are compositionally biased toward gly residues; sequence FGGGRGGNSSYGGGRD. Positions 207-285 constitute an RRM 2 domain; it reads NRVYVGNLSW…RSIRVSAAEE (79 aa).

It is found in the plastid. The protein localises to the chloroplast. Could be involved in splicing and/or processing of chloroplast RNA's. The polypeptide is 29 kDa ribonucleoprotein B, chloroplastic (Nicotiana sylvestris (Wood tobacco)).